The primary structure comprises 354 residues: S-adenosylmethionine:tRNA ribosyltransferase-isomerase (354 aa).

The protein belongs to the QueA family. In terms of assembly, monomer.

Its subcellular location is the cytoplasm. It catalyses the reaction 7-aminomethyl-7-carbaguanosine(34) in tRNA + S-adenosyl-L-methionine = epoxyqueuosine(34) in tRNA + adenine + L-methionine + 2 H(+). The protein operates within tRNA modification; tRNA-queuosine biosynthesis. Transfers and isomerizes the ribose moiety from AdoMet to the 7-aminomethyl group of 7-deazaguanine (preQ1-tRNA) to give epoxyqueuosine (oQ-tRNA). The polypeptide is S-adenosylmethionine:tRNA ribosyltransferase-isomerase (Pseudomonas syringae pv. syringae (strain B728a)).